Consider the following 324-residue polypeptide: Adenine deaminase (324 aa).

Residues H11, H13, and H189 each contribute to the Zn(2+) site. Residue E192 is the Proton donor of the active site. D270 is a binding site for Zn(2+). D271 provides a ligand contact to substrate.

Belongs to the metallo-dependent hydrolases superfamily. Adenosine and AMP deaminases family. Adenine deaminase type 2 subfamily. The cofactor is Zn(2+).

It catalyses the reaction adenine + H2O + H(+) = hypoxanthine + NH4(+). In terms of biological role, catalyzes the hydrolytic deamination of adenine to hypoxanthine. Plays an important role in the purine salvage pathway and in nitrogen catabolism. The chain is Adenine deaminase from Rhizobium meliloti (strain 1021) (Ensifer meliloti).